Consider the following 362-residue polypeptide: Heat-inducible transcription repressor HrcA (362 aa).

It belongs to the HrcA family.

Its function is as follows. Negative regulator of class I heat shock genes (grpE-dnaK-dnaJ and groELS operons). Prevents heat-shock induction of these operons. This Bradyrhizobium sp. (strain ORS 278) protein is Heat-inducible transcription repressor HrcA.